Consider the following 1174-residue polypeptide: Pesticidal crystal protein Cry1Fa (1174 aa).

The protein belongs to the delta endotoxin family.

Its function is as follows. Promotes colloidosmotic lysis by binding to the midgut epithelial cells of many lepidopteran larvae. This chain is Pesticidal crystal protein Cry1Fa (cry1Fa), found in Bacillus thuringiensis subsp. aizawai.